A 661-amino-acid chain; its full sequence is MKKILQLIKQRSITRKLLVSFLSILIIPVVILAIFAYQSASSSLDRQMMGSALENVQQLNEIINTSIGEKENSADYFSEWLTKEKYNAKSNASIAEKFSQYISINKDVESIYTSDTKGHFTRYPDLPMPSGYNPVERDWYKKAVANKGKVVITDPYKTASTNTMVVTIAQQTKDGSGVIAINMTIENLLKTTKKVNIGTQGYAFIMTKDKKVVAHPNEQSGTELKGDWLDKMLSADKGDFQYTMDGDKKKMAFDTNKLTGWKIGGTMYLDEIHEAAQPVLHLALIVLAAAIIIGIIVMTLIIRSITTPLKQLVGSSKRISEGDLTETIDIRSKDELGELGKSFNNMASSLRSLIHAIQDSVDNVAASSEELTASAAQTSKATEHITLAIEQFSNGNEKQNENIETAAEHIYQMNDGLTNMAQASEVITDSSVQSTEIASEGGKLVHQTVGQMNVIDKSVKEAEQVVRGLETKSKDITNILRVINGIADQTNLLALNAAIEAARAGEYGRGFSVVAEEVRKLAVQSADSAKEIEGLIIEIVKEINTSLGMFQSVNQEVQTGLDITDKTEMSFKRISEMTNQIAGELQNMSATVQQLSASSEEVSGASEHIASISKESSAHIQDIAASAEEQLASMEEISSSAETLSSMAEELRDMTKRFKIE.

The Cytoplasmic segment spans residues 1–16; it reads MKKILQLIKQRSITRK. A helical membrane pass occupies residues 17-37; the sequence is LLVSFLSILIIPVVILAIFAY. Residues 38–281 lie on the Extracellular side of the membrane; the sequence is QSASSSLDRQ…IHEAAQPVLH (244 aa). A Cache domain is found at 152–228; the sequence is ITDPYKTAST…QSGTELKGDW (77 aa). Residues 282 to 302 traverse the membrane as a helical segment; it reads LALIVLAAAIIIGIIVMTLII. Residues 303–355 form the HAMP domain; that stretch reads RSITTPLKQLVGSSKRISEGDLTETIDIRSKDELGELGKSFNNMASSLRSLIH. Residues 303–661 are Cytoplasmic-facing; the sequence is RSITTPLKQL…RDMTKRFKIE (359 aa). Glu-370 carries the glutamate methyl ester (Glu) modification. Residues 374–610 form the Methyl-accepting transducer domain; that stretch reads SAAQTSKATE…EVSGASEHIA (237 aa). 2 positions are modified to deamidated glutamine: Gln-593 and Gln-594. Gln-594 carries the post-translational modification Glutamate methyl ester (Gln). Residues Glu-629 and Glu-636 each carry the glutamate methyl ester (Glu) modification.

Belongs to the methyl-accepting chemotaxis (MCP) protein family. In terms of assembly, interacts with FloT. In terms of processing, deamidated by CheD on Gln-593 and Gln-594, producing glutamate residues. The glutamate residues are then methylated. Other additional sites are deamidated and methylated as well.

The protein localises to the cell membrane. The protein resides in the membrane raft. Chemotactic-signal transducers respond to changes in the concentration of attractants and repellents in the environment, transduce a signal from the outside to the inside of the cell, and facilitate sensory adaptation through the variation of the level of methylation. All amino acids serve as attractants in B.subtilis, they appear to cause an increase in the turnover methyl groups, leading to methylation of an unidentified acceptor, while repellents have been shown to cause a decrease in methyl group turnover. The methyl groups are added by a methyltransferase and removed by a methylesterase. McpA is required for taxis towards glucose and alpha-methylglucoside. The protein is Methyl-accepting chemotaxis protein McpA (mcpA) of Bacillus subtilis (strain 168).